Here is a 1001-residue protein sequence, read N- to C-terminus: Serine/threonine-protein kinase TAO1-B (1001 aa).

The Protein kinase domain occupies 28 to 281; it reads FSDLREIGHG…SDELLKHMFV (254 aa). ATP contacts are provided by residues 34-42 and K57; that span reads IGHGSFGAV. Residue D151 is the Proton acceptor of the active site. Disordered stretches follow at residues 324 to 435 and 567 to 586; these read PAVE…YRNR and KEEL…EWLS. The segment covering 350–370 has biased composition (low complexity); sequence SNQSIPSMSISASSQSSSVNS. Basic and acidic residues-rich tracts occupy residues 375–388 and 577–586; these read SDDK…EGDH and PKKEKQEWLS. 2 coiled-coil regions span residues 458 to 651 and 754 to 877; these read SELR…EHAM and KAVL…EIEA. The disordered stretch occupies residues 911-1001; that stretch reads SHNPTGGPGP…ISNGSHMSYT (91 aa). Positions 921 to 930 are enriched in low complexity; it reads HWGHPMAGPP. 2 stretches are compositionally biased toward polar residues: residues 949–967 and 975–1001; these read GSVQ…NSPQ and GGRT…MSYT.

It belongs to the protein kinase superfamily. STE Ser/Thr protein kinase family. STE20 subfamily.

It is found in the cytoplasm. It carries out the reaction L-seryl-[protein] + ATP = O-phospho-L-seryl-[protein] + ADP + H(+). The catalysed reaction is L-threonyl-[protein] + ATP = O-phospho-L-threonyl-[protein] + ADP + H(+). Serine/threonine-protein kinase involved in various processes such as p38/mapk14 stress-activated MAPK cascade, DNA damage response and regulation of cytoskeleton stability. Acts as an activator of the p38/MAPK14 stress-activated MAPK cascade by mediating phosphorylation and subsequent activation of upstream MAP kinase kinases. In response to DNA damage, involved in the G2/M transition DNA damage checkpoint by activating the p38/MAPK14 stress-activated MAPK cascade. The polypeptide is Serine/threonine-protein kinase TAO1-B (taok1-b) (Xenopus laevis (African clawed frog)).